The chain runs to 625 residues: Tyrosine-protein kinase ITK/TSK (625 aa).

A PH domain is found at 4–117; sequence FILLEEQLIK…WVLTLKEETR (114 aa). Residues 119–155 form a Btk-type zinc finger; the sequence is NNSLVSKYHPNFWMDGRWRCCSQLEKPAVGCAPYDPS. The Zn(2+) site is built by histidine 127, cysteine 138, cysteine 139, and cysteine 149. The disordered stretch occupies residues 153-174; the sequence is DPSKNASKKPLPPTPEDNRRSF. Residues 177 to 237 enclose the SH3 domain; that stretch reads PEETLVIALY…PSSYLVEKSP (61 aa). Tyrosine 186 is modified (phosphotyrosine; by autocatalysis). In terms of domain architecture, SH2 spans 245-343; it reads WYNKSISRDK…GLVTRLRYPV (99 aa). The region spanning 368 to 620 is the Protein kinase domain; the sequence is LTFVQEIGSG…SQLLSQLAEI (253 aa). Residues 374 to 382 and lysine 396 contribute to the ATP site; that span reads IGSGQFGLV. Catalysis depends on aspartate 487, which acts as the Proton acceptor. Residue tyrosine 517 is modified to Phosphotyrosine; by LCK. At serine 570 the chain carries Phosphoserine.

This sequence belongs to the protein kinase superfamily. Tyr protein kinase family. TEC subfamily. In terms of assembly, homooligomerizes; this association negatively regulates kinase activity. Interacts with PPIA/CYPA; this interaction regulates TCR signal strength via a proline-directed conformational switch in ITK. Interacts with THEMIS. Interacts with FASLG. Interacts with VAV1; this interaction is important for VAV1 localization and TCR-induced actin polarization. Interacts with TBX21. Zn(2+) is required as a cofactor. Phosphorylated at Tyr-517 in the activation loop of the kinase domain by LCK. Subsequent autophosphorylation at Tyr-186 leads to the kinase activation. The autophosphorylated Tyr-186 lies within the substrate binding sequence of the SH3 domain. In terms of processing, ubiquitinated. Is detected in the thymus, lymph node and very faintly in the spleen, but is not detected in the liver, lung, kidney, heart, brain, intestine or testis. Expressed in T-lymphocytes and mast cells. It may also be expressed in natural killer cells.

Its subcellular location is the cytoplasm. The protein resides in the nucleus. It catalyses the reaction L-tyrosyl-[protein] + ATP = O-phospho-L-tyrosyl-[protein] + ADP + H(+). In terms of biological role, tyrosine kinase that plays an essential role in regulation of the adaptive immune response. Regulates the development, function and differentiation of conventional T-cells and nonconventional NKT-cells. When antigen presenting cells (APC) activate T-cell receptor (TCR), a series of phosphorylation lead to the recruitment of ITK to the cell membrane, in the vicinity of the stimulated TCR receptor, where it is phosphorylated by LCK. Phosphorylation leads to ITK autophosphorylation and full activation. Once activated, phosphorylates PLCG1, leading to the activation of this lipase and subsequent cleavage of its substrates. In turn, the endoplasmic reticulum releases calcium in the cytoplasm and the nuclear activator of activated T-cells (NFAT) translocates into the nucleus to perform its transcriptional duty. Phosphorylates 2 essential adapter proteins: the linker for activation of T-cells/LAT protein and LCP2. Then, a large number of signaling molecules such as VAV1 are recruited and ultimately lead to lymphokine production, T-cell proliferation and differentiation. Required for TCR-mediated calcium response in gamma-delta T-cells, may also be involved in the modulation of the transcriptomic signature in the Vgamma2-positive subset of immature gamma-delta T-cells. Phosphorylates TBX21 at 'Tyr-525' and mediates its interaction with GATA3. The polypeptide is Tyrosine-protein kinase ITK/TSK (Itk) (Mus musculus (Mouse)).